A 502-amino-acid chain; its full sequence is Beta-glucosidase 7 (502 aa).

Residues 1–22 form the signal peptide; that stretch reads MKPFSQFFVFVVTVSATSYIDA. A beta-D-glucoside contacts are provided by residues Q42, H140, and 185–186; that span reads NE. Catalysis depends on E186, which acts as the Proton donor. N208 is a glycosylation site (N-linked (GlcNAc...) asparagine). Y325 is an a beta-D-glucoside binding site. Residue N359 is glycosylated (N-linked (GlcNAc...) asparagine). E392 serves as a coordination point for a beta-D-glucoside. The Nucleophile role is filled by E392. A glycan (N-linked (GlcNAc...) asparagine) is linked at N425. 2 residues coordinate a beta-D-glucoside: W435 and Y451. N457 and N479 each carry an N-linked (GlcNAc...) asparagine glycan.

It belongs to the glycosyl hydrolase 1 family.

It carries out the reaction Hydrolysis of terminal, non-reducing beta-D-glucosyl residues with release of beta-D-glucose.. This is Beta-glucosidase 7 from Arabidopsis thaliana (Mouse-ear cress).